We begin with the raw amino-acid sequence, 227 residues long: Protein LppM (227 aa).

The signal sequence occupies residues 1 to 24 (MARTRRRGMLAIAMLLMLVPLATG). C25 carries the N-palmitoyl cysteine lipid modification. The S-diacylglycerol cysteine moiety is linked to residue C25. Residues 26–185 (LRVRASITIS…ARYTDPNTRS (160 aa)) are important for bacterial uptake by host macrophages. The helical transmembrane segment at 190 to 210 (GIWLGIAAFAAAGVVAVLAWI) threads the bilayer.

In terms of processing, a shorter form (about 20 kDa) is secreted; upon overexpression of the whole protein in M.smegmatis the C-terminus of the short form is about residue 187, suggesting it is generated by cleavage of the protein before its C-terminal transmembrane domain.

The protein localises to the membrane. The protein resides in the secreted. It is found in the cell wall. A putative lipoprotein that seems to be specialized for the initial steps of macrophage infection. A non-acylated fragment (residues 26-185) binds phosphatidyl-myo-inositol mannosides (PIMs). Limits, in a TLR2-dependent fashion, bacterial uptake by host (mouse); this effect may be mediated by nonacylated fragment 26-185. Plays a TLR2-dependent role in host phagosome maturation arrest. Plays a TLR2-independent role in chemokine production during the first 24 hours of mouse infection. The protein is Protein LppM (lppM) of Mycobacterium tuberculosis (strain ATCC 25618 / H37Rv).